The primary structure comprises 193 residues: SCO1 protein homolog (193 aa).

A signal peptide spans 1–18 (MKVIKGLTAGLIFLFLCA). A lipid anchor (N-palmitoyl cysteine) is attached at cysteine 19. Residue cysteine 19 is the site of S-diacylglycerol cysteine attachment. The Thioredoxin domain occupies 26–191 (DPLNYEVEPF…IISDVKSAST (166 aa)). The Cu cation site is built by cysteine 64, cysteine 68, and histidine 154.

Belongs to the SCO1/2 family. In terms of assembly, monomer.

The protein localises to the cell membrane. In terms of biological role, necessary for insertion of copper into the active site of cytochrome c oxidase. May play a role in copper homeostasis or redox signaling. This Bacillus subtilis (strain 168) protein is SCO1 protein homolog (ypmQ).